The primary structure comprises 437 residues: Cobyrinate a,c-diamide synthase (437 aa).

A GATase cobBQ-type domain is found at 241 to 430 (KIAVAKDEAF…AHVHFFGNLD (190 aa)). Residue Cys-323 is the Nucleophile of the active site.

Belongs to the CobB/CbiA family. Mg(2+) serves as cofactor.

The enzyme catalyses cob(II)yrinate + 2 L-glutamine + 2 ATP + 2 H2O = cob(II)yrinate a,c diamide + 2 L-glutamate + 2 ADP + 2 phosphate + 2 H(+). It functions in the pathway cofactor biosynthesis; adenosylcobalamin biosynthesis; cob(II)yrinate a,c-diamide from sirohydrochlorin (anaerobic route): step 10/10. In terms of biological role, catalyzes the ATP-dependent amidation of the two carboxylate groups at positions a and c of cobyrinate, using either L-glutamine or ammonia as the nitrogen source. The polypeptide is Cobyrinate a,c-diamide synthase (Clostridium acetobutylicum (strain ATCC 824 / DSM 792 / JCM 1419 / IAM 19013 / LMG 5710 / NBRC 13948 / NRRL B-527 / VKM B-1787 / 2291 / W)).